Reading from the N-terminus, the 1666-residue chain is Cortactin-binding protein 2 (1666 aa).

Disordered stretches follow at residues 1 to 25, 202 to 224, 366 to 411, 457 to 481, and 501 to 619; these read MATD…APAE, EKKR…AEME, IVSS…PAIQ, NANN…SPTS, and RFTS…PKPS. Positions 120–274 form a coiled coil; it reads KMQERMSTQL…MTEQLKRGND (155 aa). 2 stretches are compositionally biased toward low complexity: residues 385-398 and 457-468; these read GPST…PSST and NANNDQDQNGNN. Over residues 469–481 the composition is skewed to polar residues; that stretch reads TQSPPSRDVSPTS. Asymmetric dimethylarginine is present on Arg501. 6 ANK repeats span residues 712–742, 746–775, 779–808, 812–841, 845–874, and 915–945; these read GRPT…DINH, DGHS…QVNA, DGFT…NINH, EGQT…DRSV, DGWT…PACG, and EGWT…EPER. Ser1527 is subject to Phosphoserine. Residues 1545-1566 are compositionally biased toward basic and acidic residues; that stretch reads SESDISKIADTRDDLRRFDSSR. Disordered regions lie at residues 1545–1601 and 1620–1666; these read SESD…RSNR and RSKI…KPNQ. A compositionally biased stretch (polar residues) spans 1585 to 1594; sequence KEVSPLSSHQ. Low complexity predominate over residues 1627 to 1641; it reads SQNTKRSSSSSNTRQ. A compositionally biased stretch (basic and acidic residues) spans 1648–1666; it reads SKDEIWNLRNNEQIEKPNQ.

Interacts with CTTN/cortactin SH3 domain. Interacts with STRN, STRN4/zinedin and MOB4/phocein; this interactions mediate the association with the STRIPAK core complex and may regulate dendritic spine distribution of the STRIPAK complex in hippocampal neurons. Activation of glutamate receptors weakens the interaction with STRN and STRN4.

The protein localises to the cytoplasm. It localises to the cell cortex. Its subcellular location is the cell projection. The protein resides in the dendritic spine. Regulates the dendritic spine distribution of CTTN/cortactin in hippocampal neurons, and thus controls dendritic spinogenesis and dendritic spine maintenance. Associates with the striatin-interacting phosphatase and kinase (STRIPAK) core complex to regulate dendritic spine distribution of the STRIPAK complex in hippocampal neurons. The chain is Cortactin-binding protein 2 (CTTNBP2) from Echinops telfairi (Lesser hedgehog tenrec).